The primary structure comprises 171 residues: 3-hydroxydecanoyl-[acyl-carrier-protein] dehydratase (171 aa).

His-70 is a catalytic residue.

Belongs to the thioester dehydratase family. FabA subfamily. Homodimer.

The protein localises to the cytoplasm. The enzyme catalyses a (3R)-hydroxyacyl-[ACP] = a (2E)-enoyl-[ACP] + H2O. It carries out the reaction (3R)-hydroxydecanoyl-[ACP] = (2E)-decenoyl-[ACP] + H2O. The catalysed reaction is (2E)-decenoyl-[ACP] = (3Z)-decenoyl-[ACP]. Its pathway is lipid metabolism; fatty acid biosynthesis. Its function is as follows. Necessary for the introduction of cis unsaturation into fatty acids. Catalyzes the dehydration of (3R)-3-hydroxydecanoyl-ACP to E-(2)-decenoyl-ACP and then its isomerization to Z-(3)-decenoyl-ACP. Can catalyze the dehydratase reaction for beta-hydroxyacyl-ACPs with saturated chain lengths up to 16:0, being most active on intermediate chain length. In Pseudomonas putida (strain GB-1), this protein is 3-hydroxydecanoyl-[acyl-carrier-protein] dehydratase.